The following is a 432-amino-acid chain: Lysosomal acid phosphatase (432 aa).

The first 32 residues, 1-32 (MADGSCLGSGPQLGLIALLVVLLFSAVPLAQS), serve as a signal peptide directing secretion. The Lumenal segment spans residues 33 to 384 (RELRFVTLVY…TTSFIMTEET (352 aa)). Histidine 44 acts as the Nucleophile in catalysis. Asparagine 94, asparagine 135, asparagine 179, asparagine 193, and asparagine 269 each carry an N-linked (GlcNAc...) asparagine glycan. Intrachain disulfides connect cysteine 161–cysteine 373, cysteine 214–cysteine 313, and cysteine 348–cysteine 352. Aspartate 290 (proton donor) is an active-site residue. N-linked (GlcNAc...) asparagine glycans are attached at residues asparagine 325 and asparagine 334. Residues 385 to 405 (IIGLTIGAIALFIIIVVLMLL) traverse the membrane as a helical segment. Residues 406–432 (SCNEPKDDGYQHVSDEGDDHETKGLAM) are Cytoplasmic-facing.

The protein belongs to the histidine acid phosphatase family. In terms of processing, the membrane-bound form is converted to the soluble form by sequential proteolytic processing. First, the C-terminal cytoplasmic tail is removed. Cleavage by a lysosomal protease releases the soluble form in the lysosome lumen.

The protein resides in the lysosome membrane. It localises to the lysosome lumen. The enzyme catalyses a phosphate monoester + H2O = an alcohol + phosphate. This chain is Lysosomal acid phosphatase (acp2), found in Xenopus laevis (African clawed frog).